The chain runs to 648 residues: Leucine-rich repeat transmembrane protein FLRT3 (648 aa).

Positions 1–28 (MSTETWNLFVAWAQLLLLFRISPQYVNA) are cleaved as a signal peptide. The Extracellular portion of the chain corresponds to 29–527 (KPCPSVCRCD…KEPYKNSSLP (499 aa)). The LRRNT domain occupies 30–62 (PCPSVCRCDGGFIYCNDRDLTSIPSGIPDDATT). Disulfide bonds link cysteine 31–cysteine 37 and cysteine 35–cysteine 44. LRR repeat units lie at residues 58 to 82 (DDAT…LRGL), 83 to 105 (DKVE…LPKN), 107 to 126 (KELH…ALSQ), 127 to 152 (IPSI…AFRD), 154 to 179 (IFLR…TIEE), 181 to 197 (RLDD…SLQD), 198 to 223 (LTNL…VFMN), 225 to 246 (INLT…NLPG), 247 to 269 (TNLR…AFAD), and 270 to 293 (LTQL…IFDD). N-linked (GlcNAc...) asparagine glycosylation occurs at asparagine 226. Residues 305–356 (NPWYCGCKMKWVRDWLQSLPSKVNVRGLMCQAPERVRGMTIKDLNKELFDCK) form the LRRCT domain. Cysteine 309 and cysteine 334 are oxidised to a cystine. Residues 409-503 (KIITIQVKSI…VCIETETAPL (95 aa)) form the Fibronectin type-III domain. A helical transmembrane segment spans residues 528 to 548 (LAAIIGGAVALVAITLLALVC). Residues 549-648 (WYVHRNGSLF…GIPDSDHSHS (100 aa)) lie on the Cytoplasmic side of the membrane. Low complexity predominate over residues 624-633 (NSHSESSSNR). The disordered stretch occupies residues 624 to 648 (NSHSESSSNRSYRDSGIPDSDHSHS).

Interacts with fgfr1 and fgfr4. Interacts with rnd1, cdh1 and pcdh8. Interacts (via extracellular domain) with unc5b and unc5d (via extracellular domain). N-glycosylated. In terms of processing, proteolytic cleavage in the juxtamembrane region gives rise to a soluble ectodomain. Cleavage is probably effected by a metalloprotease.

The protein resides in the cell membrane. The protein localises to the endoplasmic reticulum membrane. It localises to the cell junction. Its subcellular location is the focal adhesion. It is found in the secreted. The protein resides in the cell projection. The protein localises to the axon. It localises to the growth cone membrane. In terms of biological role, functions in cell-cell adhesion, cell migration and axon guidance, exerting an attractive or repulsive role depending on its interaction partners. Modulates cadherin-dependent cell-cell adhesion and cell sorting. Plays a role in the spatial organization of brain neurons. Plays a role in vascular development. Plays a role in cell-cell adhesion via its interaction with latrophilins that are expressed at the surface of adjacent cells. Mediates axon attraction towards cells expressing ntn1. mediates axon growth cone collapse and plays a repulsive role in neuron guidance via its interaction with unc-5 family members. Plays a role in the regulation of the density of glutamaergic synapses. Plays a role in signaling cascades downstream of fgfr1, and possibly also other fgfr family members. Plays a role in embryonic morphogenesis, but not in embryonic patterning. The chain is Leucine-rich repeat transmembrane protein FLRT3 from Xenopus tropicalis (Western clawed frog).